The sequence spans 567 residues: Pyruvate decarboxylase (567 aa).

Pyruvate is bound by residues D28 and H117. Thiamine diphosphate-binding positions include T393 and 416-418 (GSI). D447 contributes to the Mg(2+) binding site. Thiamine diphosphate contacts are provided by residues 448 to 449 (GS) and 475 to 480 (NDGYTI). The Mg(2+) site is built by N475 and G477. Residue E481 coordinates pyruvate.

It belongs to the TPP enzyme family. As to quaternary structure, homotetramer. It depends on Mg(2+) as a cofactor. Thiamine diphosphate is required as a cofactor.

The protein resides in the cytoplasm. It catalyses the reaction a 2-oxocarboxylate + H(+) = an aldehyde + CO2. The catalysed reaction is pyruvate + H(+) = acetaldehyde + CO2. The sequence is that of Pyruvate decarboxylase (PDC11) from Candida albicans (strain SC5314 / ATCC MYA-2876) (Yeast).